A 337-amino-acid polypeptide reads, in one-letter code: Mitochondrial uncoupling protein 6 (337 aa).

Solcar repeat units follow at residues 4–136 (KPFL…LKRR), 145–236 (FPLV…VKEI), and 246–331 (GGIG…VRGL). Helical transmembrane passes span 6–26 (FLEGGIAAIIAGALTHPLDLI), 105–125 (PAALFSGVSATILRQMLYSAT), 151–171 (ITAGLIAGAVGSVVGNPADVA), 210–230 (RGSWLTVNRAMIVTASQLATY), 252–272 (VAASFAAGIVAAVASNPIDVV), and 304–324 (YKGLVPTATRQGPFTMILFLT).

Belongs to the mitochondrial carrier (TC 2.A.29) family.

It is found in the mitochondrion inner membrane. Its function is as follows. PUMPS are mitochondrial transporter proteins that create proton leaks across the inner mitochondrial membrane, thus uncoupling oxidative phosphorylation. This leads to a decrease in the efficiency of oxidative phosphorylation and an increase in heat production. May be involved in protecting plant cells against oxidative stress damage. Recombinant PUMP6, reconstituted into liposomes, transports a wide range of dicarboxylic acids including malate, oxaloacetate and succinate as well as phosphate, sulfate and thiosulfate. However, it is unknown if these transports are of any biological significance in vivo. The chain is Mitochondrial uncoupling protein 6 (PUMP6) from Arabidopsis thaliana (Mouse-ear cress).